We begin with the raw amino-acid sequence, 585 residues long: Switch-associated protein 70 (585 aa).

A PH domain is found at aspartate 210 to histidine 306. Positions histidine 316 to histidine 529 form a coiled coil. Residues alanine 347–glutamate 373 are disordered. Residues lysine 351 to glutamate 373 are compositionally biased toward basic and acidic residues.

As to quaternary structure, the SWAP complex consists of NPM1, NCL, PARP1 and SWAP70. Post-translationally, tyrosine-phosphorylated. In terms of tissue distribution, spleen. Expressed only in B-cells that have been induced to switch to various Ig isotypes.

The protein localises to the cytoplasm. The protein resides in the cell membrane. Its subcellular location is the nucleus. It localises to the cell projection. It is found in the lamellipodium. The protein localises to the cytoskeleton. Functionally, phosphatidylinositol 3,4,5-trisphosphate-dependent guanine nucleotide exchange factor (GEF) which, independently of RAS, transduces signals from tyrosine kinase receptors to RAC. It also mediates signaling of membrane ruffling. Regulates the actin cytoskeleton as an effector or adapter protein in response to agonist stimulated phosphatidylinositol (3,4)-bisphosphate production and cell protrusion. The polypeptide is Switch-associated protein 70 (Swap70) (Mus musculus (Mouse)).